Here is a 285-residue protein sequence, read N- to C-terminus: NADPH-dependent 7-cyano-7-deazaguanine reductase (285 aa).

Residue 91-93 (IES) participates in substrate binding. Residue 93–94 (SK) coordinates NADPH. The active-site Thioimide intermediate is Cys192. Asp199 acts as the Proton donor in catalysis. 231–232 (HE) contacts substrate. 260–261 (RG) is a binding site for NADPH.

It belongs to the GTP cyclohydrolase I family. QueF type 2 subfamily. In terms of assembly, homodimer.

It is found in the cytoplasm. The enzyme catalyses 7-aminomethyl-7-carbaguanine + 2 NADP(+) = 7-cyano-7-deazaguanine + 2 NADPH + 3 H(+). It functions in the pathway tRNA modification; tRNA-queuosine biosynthesis. Its function is as follows. Catalyzes the NADPH-dependent reduction of 7-cyano-7-deazaguanine (preQ0) to 7-aminomethyl-7-deazaguanine (preQ1). The sequence is that of NADPH-dependent 7-cyano-7-deazaguanine reductase from Psychromonas ingrahamii (strain DSM 17664 / CCUG 51855 / 37).